The sequence spans 140 residues: Putative 6-pyruvoyl tetrahydrobiopterin synthase (140 aa).

A Zn(2+)-binding site is contributed by H19. Catalysis depends on C38, which acts as the Proton acceptor. 2 residues coordinate Zn(2+): H44 and H46. Residues H84 and E129 each act as charge relay system in the active site.

It belongs to the PTPS family. As to quaternary structure, homohexamer formed of two homotrimers in a head to head fashion. Zn(2+) serves as cofactor.

It carries out the reaction 7,8-dihydroneopterin 3'-triphosphate = 6-pyruvoyl-5,6,7,8-tetrahydropterin + triphosphate + H(+). Its pathway is cofactor biosynthesis; tetrahydrobiopterin biosynthesis; tetrahydrobiopterin from 7,8-dihydroneopterin triphosphate: step 1/3. Its function is as follows. Involved in the biosynthesis of tetrahydrobiopterin, an essential cofactor of aromatic amino acid hydroxylases. Catalyzes the transformation of 7,8-dihydroneopterin triphosphate into 6-pyruvoyl tetrahydropterin. The protein is Putative 6-pyruvoyl tetrahydrobiopterin synthase (ptps-1) of Caenorhabditis elegans.